Here is a 121-residue protein sequence, read N- to C-terminus: Heimdall profilin (121 aa).

It belongs to the Asgard profilin family.

It is found in the cytoplasm. The protein localises to the cytoskeleton. Functionally, binds to actin and affects the structure of the cytoskeleton. At high concentrations inhibits spontaneous rabbit actin nucleation. This strongly suggests this archaea has a profilin-regulated actin system, and actin-type genes can be identified in this organism. This chain is Heimdall profilin, found in Heimdallarchaeota archaeon (strain LC_2).